A 1262-amino-acid polypeptide reads, in one-letter code: MTSGSELKAEVDAPVVNGKDELVHEEDNNDSGHSSINTPDASEDKQTDKLVKVTIQPSCGEAFDLHLSDNELVQELYQTLLDREATCHRTCFSLYLNGTAVDNYSEVRSVPGFIDGCTLNVVDEPYTVRDARLHLRQVRELLRFGLVQDQHEPPCGNEAQSYLASIDLNPSEKKESKQSDILPPDYVLPGCKERSLAHLVVPQQKELIAVKDIAFSPFNPPPGPRKLRGDVLYIDVTTVENRVYHLTCCTRGFYVNNSQEQKFDPTISNANKTIYQSVIELLQNVSPGFKKVYPQILKRRVEKSLVERLPTSYPVSTWVASPLKPDNYSSDSLRAIELIEPFRVGFEDHMPGLLRDWNEELQTTFEMPRKSLAERAVRDRSYYKIHADYVNAAAKGVQSILDGNILAINPGEDKKTHMYIWNNIFFSLGFDVRDHYKELGGDAAAFAATSTDLQGVRAFATLEDPKLNTLGMAIFDYRGYRVTAQSIIPGILEREQEQSVVYGSIDFGKTVVSDEKYHALLEDAAQQLKMLPHNVISVKDGVEQELKLFTSYEAKGIVGNDGRKYVLDLLRSMPPDVHYLEDAEVSETAKDLGYPRKFPHKLSALRRELVDQFCESRLVMFIQSTARKIRALITEAKEKNDEELIKQAAEAESELSLVFVAVSEDREIETKNKIVQDAIKEACAEIHSIYEDRFVIKFNPDCFSPNVKHAPSENLERQRRVVIDAAEYLLTNQIPEIVQSFKDCTVQPIDGNNLADILHSKGINIRYLGEIGKRVQDTNSFARPLVLSDIVARSAKHVIRKINVQTPVDQLVVSTSHILNCLFSTVSEPSPVASHAHKKSSKKNGKKKNSGVWATLTTASLWKSICEESAYYYGYHIDTETLDKFLEQHEIQKTALFRRVVKIMGVQIVARDYQLDSSAKKVAAFTEDDIINFYPIIKHHQPFTVDAKKMIIRGQHAMSLGASREAYECISEAINIMTAVYGVMHPDMPQCLRALARLGHVLGETPDALNHQHKATVMSERLIGLDSGNTIIEYNSLIHYLLICFQINLAHFAFGALLIPGSLRPLYRARYLMNLVFGEKHPIMAQIDANIGTILFTIQEYDTALKYLQSADAISKAIGEPRKLKTGLISNLIARTHAARGDFRAALVAEKETSSIYTELYGKNHQRVKDSGEYLRTLTQQAVTFQKKMLNPDNNTNINELFQIQPPPISALFDILNIINGIMIIGIPGLSNLAALEKEQIGTAEESKATDVAAQLDNETLD.

The tract at residues methionine 1 to threonine 47 is disordered. The span at serine 31–aspartate 40 shows a compositional bias: polar residues. Residues alanine 335 to leucine 580 enclose the Clu domain.

The protein belongs to the CLU family.

It localises to the cytoplasm. MRNA-binding protein involved in proper cytoplasmic distribution of mitochondria. This Caenorhabditis briggsae protein is Clustered mitochondria protein homolog.